The sequence spans 146 residues: Transcriptional regulator MraZ (146 aa).

2 consecutive SpoVT-AbrB domains span residues 5-47 (EYYH…TITD) and 76-119 (SVQV…AKER).

The protein belongs to the MraZ family. As to quaternary structure, forms oligomers.

The protein localises to the cytoplasm. It is found in the nucleoid. The chain is Transcriptional regulator MraZ from Dictyoglomus turgidum (strain DSM 6724 / Z-1310).